We begin with the raw amino-acid sequence, 414 residues long: Glutamyl-tRNA reductase (414 aa).

Residues 47 to 50, Ser106, 111 to 113, and Gln117 each bind substrate; these read TCNR and EAQ. Catalysis depends on Cys48, which acts as the Nucleophile. 185 to 190 contacts NADP(+); sequence GAGRTG.

The protein belongs to the glutamyl-tRNA reductase family. In terms of assembly, homodimer.

It carries out the reaction (S)-4-amino-5-oxopentanoate + tRNA(Glu) + NADP(+) = L-glutamyl-tRNA(Glu) + NADPH + H(+). It participates in porphyrin-containing compound metabolism; protoporphyrin-IX biosynthesis; 5-aminolevulinate from L-glutamyl-tRNA(Glu): step 1/2. Its function is as follows. Catalyzes the NADPH-dependent reduction of glutamyl-tRNA(Glu) to glutamate 1-semialdehyde (GSA). This Herpetosiphon aurantiacus (strain ATCC 23779 / DSM 785 / 114-95) protein is Glutamyl-tRNA reductase.